A 421-amino-acid chain; its full sequence is 4-hydroxy-3-methylbut-2-en-1-yl diphosphate synthase (flavodoxin) (421 aa).

[4Fe-4S] cluster is bound by residues Cys298, Cys301, Cys344, and Glu351.

Belongs to the IspG family. [4Fe-4S] cluster serves as cofactor.

The catalysed reaction is (2E)-4-hydroxy-3-methylbut-2-enyl diphosphate + oxidized [flavodoxin] + H2O + 2 H(+) = 2-C-methyl-D-erythritol 2,4-cyclic diphosphate + reduced [flavodoxin]. It functions in the pathway isoprenoid biosynthesis; isopentenyl diphosphate biosynthesis via DXP pathway; isopentenyl diphosphate from 1-deoxy-D-xylulose 5-phosphate: step 5/6. Functionally, converts 2C-methyl-D-erythritol 2,4-cyclodiphosphate (ME-2,4cPP) into 1-hydroxy-2-methyl-2-(E)-butenyl 4-diphosphate. The chain is 4-hydroxy-3-methylbut-2-en-1-yl diphosphate synthase (flavodoxin) from Neisseria meningitidis serogroup B (strain ATCC BAA-335 / MC58).